The chain runs to 296 residues: D-alanine--D-alanine ligase (296 aa).

The ATP-grasp domain occupies Thr-99–Gln-292. ATP is bound at residue Gly-125 to Thr-176. Mg(2+)-binding residues include Asp-247, Glu-259, and Asn-261.

Belongs to the D-alanine--D-alanine ligase family. The cofactor is Mg(2+). Mn(2+) serves as cofactor.

The protein resides in the cytoplasm. The catalysed reaction is 2 D-alanine + ATP = D-alanyl-D-alanine + ADP + phosphate + H(+). The protein operates within cell wall biogenesis; peptidoglycan biosynthesis. Cell wall formation. The protein is D-alanine--D-alanine ligase of Pseudothermotoga lettingae (strain ATCC BAA-301 / DSM 14385 / NBRC 107922 / TMO) (Thermotoga lettingae).